We begin with the raw amino-acid sequence, 181 residues long: ADP-ribosylation factor 1-like 2 (181 aa).

Gly2 carries N-myristoyl glycine lipidation. The interval 3-16 (NVFGSLFKGLFGKR) is important for the stable binding to the membranes. GTP-binding positions include 24–32 (GLDAAGKTT), 126–129 (NKQD), and Ala160.

Belongs to the small GTPase superfamily. Arf family. As to expression, expressed in hypodermis, intestine, spermatheca, uterus, gonadal sheath, vulva cells, pharynx muscle, body wall muscle, head neurons, ventral nerve cord.

It is found in the golgi apparatus membrane. It catalyses the reaction GTP + H2O = GDP + phosphate + H(+). With respect to regulation, alternates between an inactive GDP-bound form and an active GTP-bound form. Activated by a guanine nucleotide-exchange factor (GEF) and inactivated by GTPase-activating protein (GAP). Functionally, small GTPase involved in protein trafficking between different compartments. Modulates vesicle budding and uncoating within the Golgi complex. In its GTP-bound form, triggers the recruitment of coatomer proteins to the Golgi membrane. The hydrolysis of ARF1-bound GTP, which is mediated by ARFGAPs proteins, is required for dissociation of coat proteins from Golgi membranes and vesicles. Involved in endoplasmic reticulum dynamics during embryogenesis. Also required for adult germline function. Plays a role in cell shedding during embryogenesis probably by promoting the endocytosis of cell adhesion molecules. During neurogenesis, involved in cell autonomous Q.p neuroblast asymmetric divisions that generate one precursor cell and one apoptotic cell, probably by controlling endocytosis. Plays a role in maintaining mitochondrial morphology. The protein is ADP-ribosylation factor 1-like 2 of Caenorhabditis elegans.